A 350-amino-acid polypeptide reads, in one-letter code: Protein TRIGALACTOSYLDIACYLGLYCEROL 1, chloroplastic (350 aa).

The tract at residues 67–86 is disordered; sequence SMSMLEEETSTENNAPSQEA. A helical transmembrane segment spans residues 98-117; that stretch reads YIWRGLSVPIIAGQVVLRIL. Residues 118–136 are Stromal-facing; it reads KGKIHWRNTLQQLERTGPK. A helical transmembrane segment spans residues 137-157; the sequence is SLGVCLLTSTFVGMAFTIQFV. Residues 158 to 168 lie on the Chloroplast intermembrane side of the membrane; the sequence is REFTRLGLNRS. Residues 169–189 form a helical membrane-spanning segment; the sequence is IGGVLALAFSRELSPVITSIV. Topologically, residues 190 to 229 are stromal; that stretch reads VAGRMGSAFAAELGTMQVSEQTDTLRVLGADPIDYLITPR. A helical membrane pass occupies residues 230–250; sequence VIASCLALPFLTLMCFTVGMA. Topologically, residues 251-288 are chloroplast intermembrane; that stretch reads SSALLSDAVYGISINIIMDSAHRALRPWDIVSAMIKSQ. A helical transmembrane segment spans residues 289–309; it reads VFGAIISVISCSWGVTTTGGA. Over 310 to 318 the chain is Stromal; sequence KGVGESTTS. Residues 319–339 traverse the membrane as a helical segment; it reads AVVMSLVGIFIADFVLSSFFF. At 340–350 the chain is on the chloroplast intermembrane side; it reads QGAGDSLKNCV.

It belongs to the MlaE permease family. In terms of assembly, permease subunit of the TGD complex, a lipid translocator at the inner chloroplast envelope membrane made of TGD1, TGD2 and TGD3. Interacts with TGD2 and TGD3 with an overall subunit stoichiometry of 2 TGD1, 2 TGD3 and 8 to 12 TGD2. Interacts with TGD5. High levels in green tissues, but low levels in nongreen tissues such as roots.

It localises to the plastid. The protein localises to the chloroplast inner membrane. Functionally, required during embryogenesis. Permease involved in lipid transfer from the endoplasmic reticulum (ER) to plastids, and necessary for thylakoids formation. This chain is Protein TRIGALACTOSYLDIACYLGLYCEROL 1, chloroplastic, found in Arabidopsis thaliana (Mouse-ear cress).